Consider the following 647-residue polypeptide: Chaperone protein DnaK (647 aa).

Position 200 is a phosphothreonine; by autocatalysis (Thr200). Over residues 611–631 (AGEQGAAGAAGAGAQQQAQPQ) the composition is skewed to low complexity. The interval 611–647 (AGEQGAAGAAGAGAQQQAQPQDDNVVDAEFKEVNDKK) is disordered. The segment covering 638 to 647 (AEFKEVNDKK) has biased composition (basic and acidic residues).

This sequence belongs to the heat shock protein 70 family.

Acts as a chaperone. This Cupriavidus taiwanensis (strain DSM 17343 / BCRC 17206 / CCUG 44338 / CIP 107171 / LMG 19424 / R1) (Ralstonia taiwanensis (strain LMG 19424)) protein is Chaperone protein DnaK.